A 180-amino-acid polypeptide reads, in one-letter code: Acireductone dioxygenase (180 aa).

Fe(2+)-binding residues include His-97, His-99, Glu-103, and His-141. Residues His-97, His-99, Glu-103, and His-141 each contribute to the Ni(2+) site.

This sequence belongs to the acireductone dioxygenase (ARD) family. In terms of assembly, monomer. Fe(2+) is required as a cofactor. Requires Ni(2+) as cofactor.

The enzyme catalyses 1,2-dihydroxy-5-(methylsulfanyl)pent-1-en-3-one + O2 = 3-(methylsulfanyl)propanoate + CO + formate + 2 H(+). It catalyses the reaction 1,2-dihydroxy-5-(methylsulfanyl)pent-1-en-3-one + O2 = 4-methylsulfanyl-2-oxobutanoate + formate + 2 H(+). It functions in the pathway amino-acid biosynthesis; L-methionine biosynthesis via salvage pathway; L-methionine from S-methyl-5-thio-alpha-D-ribose 1-phosphate: step 5/6. Catalyzes 2 different reactions between oxygen and the acireductone 1,2-dihydroxy-3-keto-5-methylthiopentene (DHK-MTPene) depending upon the metal bound in the active site. Fe-containing acireductone dioxygenase (Fe-ARD) produces formate and 2-keto-4-methylthiobutyrate (KMTB), the alpha-ketoacid precursor of methionine in the methionine recycle pathway. Ni-containing acireductone dioxygenase (Ni-ARD) produces methylthiopropionate, carbon monoxide and formate, and does not lie on the methionine recycle pathway. In Yersinia pseudotuberculosis serotype O:1b (strain IP 31758), this protein is Acireductone dioxygenase.